Reading from the N-terminus, the 177-residue chain is Shikimate kinase (177 aa).

G14 to T19 is an ATP binding site. S18 provides a ligand contact to Mg(2+). Positions 36, 60, and 82 each coordinate substrate. R120 is a binding site for ATP. A substrate-binding site is contributed by R139.

Belongs to the shikimate kinase family. As to quaternary structure, monomer. The cofactor is Mg(2+).

It is found in the cytoplasm. It carries out the reaction shikimate + ATP = 3-phosphoshikimate + ADP + H(+). Its pathway is metabolic intermediate biosynthesis; chorismate biosynthesis; chorismate from D-erythrose 4-phosphate and phosphoenolpyruvate: step 5/7. Its function is as follows. Catalyzes the specific phosphorylation of the 3-hydroxyl group of shikimic acid using ATP as a cosubstrate. This chain is Shikimate kinase, found in Gloeobacter violaceus (strain ATCC 29082 / PCC 7421).